The primary structure comprises 369 residues: Serine/threonine-protein kinase srb10 (369 aa).

The region spanning 5–319 (YKIIGFISSG…AKQALEHVFF (315 aa)) is the Protein kinase domain. Residues 11 to 19 (ISSGTYGKV) and K36 contribute to the ATP site. D140 (proton acceptor) is an active-site residue.

Belongs to the protein kinase superfamily. CMGC Ser/Thr protein kinase family. CDC2/CDKX subfamily. Component of the Cdk8 module of the Mediator complex. The Cdk8 module is composed of srb8, srb9, srb10 and srb11. Interacts with med17 and med18.

The protein resides in the nucleus. The catalysed reaction is L-seryl-[protein] + ATP = O-phospho-L-seryl-[protein] + ADP + H(+). The enzyme catalyses L-threonyl-[protein] + ATP = O-phospho-L-threonyl-[protein] + ADP + H(+). It catalyses the reaction [DNA-directed RNA polymerase] + ATP = phospho-[DNA-directed RNA polymerase] + ADP + H(+). Catalytic component of the Cdk8 module/Srb8-11 module which is a regulatory module of the Mediator complex that regulates basal RNA polymerase II transcription. The Cdk8 module may sterically hinder the interaction between Mediator and RNA polymerase II leading to transcriptional repression of a subset of genes regulated by Mediator. This chain is Serine/threonine-protein kinase srb10 (srb10), found in Schizosaccharomyces pombe (strain 972 / ATCC 24843) (Fission yeast).